Here is a 235-residue protein sequence, read N- to C-terminus: MRPSGRNNDQLRNLKVTHNFTKHAEGSVLIEFGDTKVICTASVVAGVPKFKKDSGEGWLTAEYGMLPRSTHMRMDREAARGKQSGRTQEIQRLIGRALRASVDLTAIGENTIKIDCDVIQADGGTRTASITGASLAIADAIEYMKQNGMLDEQANPLLSQVAAISVGIYNNEPVLDLDYDEDSNAETDMNVVMNSNGGIIEIQGTAEGKDFSEEEFAKMLGLAKKGIKEIFATVF.

Phosphate contacts are provided by residues arginine 86 and 124–126 (GTR).

It belongs to the RNase PH family. As to quaternary structure, homohexameric ring arranged as a trimer of dimers.

It carries out the reaction tRNA(n+1) + phosphate = tRNA(n) + a ribonucleoside 5'-diphosphate. Phosphorolytic 3'-5' exoribonuclease that plays an important role in tRNA 3'-end maturation. Removes nucleotide residues following the 3'-CCA terminus of tRNAs; can also add nucleotides to the ends of RNA molecules by using nucleoside diphosphates as substrates, but this may not be physiologically important. Probably plays a role in initiation of 16S rRNA degradation (leading to ribosome degradation) during starvation. This chain is Ribonuclease PH, found in Francisella tularensis subsp. mediasiatica (strain FSC147).